Reading from the N-terminus, the 616-residue chain is Chaperone protein HscA (616 aa).

Belongs to the heat shock protein 70 family.

In terms of biological role, chaperone involved in the maturation of iron-sulfur cluster-containing proteins. Has a low intrinsic ATPase activity which is markedly stimulated by HscB. Involved in the maturation of IscU. The protein is Chaperone protein HscA of Escherichia coli (strain SMS-3-5 / SECEC).